We begin with the raw amino-acid sequence, 964 residues long: Lon protease homolog, mitochondrial (964 aa).

Residues 89-300 form the Lon N-terminal domain; that stretch reads VIALPLPHRP…LTLELVKKEM (212 aa). Residue 455 to 462 coordinates ATP; sequence GPPGVGKT. Residues 663-740 are disordered; that stretch reads GVSNEPDHES…TSKGNKGTDG (78 aa). The span at 673–687 shows a compositional bias: polar residues; the sequence is VSASVTEESGNGDNT. The segment covering 688-698 has biased composition (basic and acidic residues); that stretch reads TTKDEILKDPA. Over residues 703–712 the composition is skewed to polar residues; it reads SVTNNVTNPA. The 185-residue stretch at 773–957 folds into the Lon proteolytic domain; the sequence is HTPVGVVMGL…SEIYDLAFQS (185 aa). Residues serine 863 and lysine 906 contribute to the active site.

Belongs to the peptidase S16 family. In terms of assembly, homoheptamer. Organized in a ring with a central cavity.

It localises to the mitochondrion matrix. It catalyses the reaction Hydrolysis of proteins in presence of ATP.. Functionally, ATP-dependent serine protease that mediates the selective degradation of misfolded, unassembled or oxidatively damaged polypeptides as well as certain short-lived regulatory proteins in the mitochondrial matrix. May also have a chaperone function in the assembly of inner membrane protein complexes. Participates in the regulation of mitochondrial gene expression and in the maintenance of the integrity of the mitochondrial genome. Binds to mitochondrial DNA in a site-specific manner. In Zea mays (Maize), this protein is Lon protease homolog, mitochondrial (LON2).